The chain runs to 343 residues: Selenide, water dikinase (343 aa).

Residue cysteine 15 is part of the active site. Residues lysine 18 and 46-48 (NKD) each bind ATP. Aspartate 49 serves as a coordination point for Mg(2+). ATP-binding positions include aspartate 66, aspartate 89, and 137 to 139 (GHS). Aspartate 89 provides a ligand contact to Mg(2+). Aspartate 225 is a binding site for Mg(2+).

Belongs to the selenophosphate synthase 1 family. Class I subfamily. As to quaternary structure, homodimer. Mg(2+) serves as cofactor.

It carries out the reaction hydrogenselenide + ATP + H2O = selenophosphate + AMP + phosphate + 2 H(+). In terms of biological role, synthesizes selenophosphate from selenide and ATP. This is Selenide, water dikinase from Sulfurovum sp. (strain NBC37-1).